The primary structure comprises 625 residues: Probable potassium transport system protein Kup 2 (625 aa).

Helical transmembrane passes span 15 to 35 (LSFA…LYAF), 52 to 72 (ILSL…LVIV), 98 to 118 (GGWL…DGML), 134 to 154 (LSPN…FFLF), 164 to 184 (IGVY…ILGF), 212 to 232 (FALF…ALFA), 246 to 266 (WFAV…AFVL), 284 to 304 (FLPV…QAII), 336 to 356 (VYLP…VVIF), 365 to 385 (AYGI…GIIA), 394 to 414 (FKIL…AGNI), and 417 to 437 (LLTG…VMYT).

It belongs to the HAK/KUP transporter (TC 2.A.72) family.

Its subcellular location is the cell inner membrane. The enzyme catalyses K(+)(in) + H(+)(in) = K(+)(out) + H(+)(out). Functionally, transport of potassium into the cell. Likely operates as a K(+):H(+) symporter. The polypeptide is Probable potassium transport system protein Kup 2 (Legionella pneumophila (strain Paris)).